The primary structure comprises 141 residues: Hemoglobin subunit alpha-A (141 aa).

The Globin domain occupies 1-141 (VLSAADKNNV…VGNVLTAKYR (141 aa)). His-58 serves as a coordination point for O2. His-87 is a binding site for heme b.

Belongs to the globin family. Heterotetramer of two alpha chains and two beta chains. Red blood cells.

Involved in oxygen transport from the lung to the various peripheral tissues. The protein is Hemoglobin subunit alpha-A (HBAA) of Francolinus pondicerianus (Grey francolin).